A 90-amino-acid chain; its full sequence is Putative UPF0401 protein YpjI (90 aa).

This sequence belongs to the UPF0401 family.

The protein is Putative UPF0401 protein YpjI (ypjI) of Escherichia coli (strain K12).